Reading from the N-terminus, the 291-residue chain is Putative ribosomal protein uL16-like, mitochondrial (291 aa).

Residues 1–27 (MQRFMFSRVVEHQRQISRGFLSLVPSL) constitute a mitochondrion transit peptide. The segment covering 127-137 (VHETSNNEKKQ) has biased composition (basic and acidic residues). Residues 127–173 (VHETSNNEKKQQKQKSSVNEKKPKKKKKSSISDIPRRTKFQKHHRGR) are disordered. Basic residues predominate over residues 163–173 (RTKFQKHHRGR).

This sequence belongs to the universal ribosomal protein uL16 family.

The protein localises to the mitochondrion. Could be a component of the large subunit of mitochondrial ribosome. The sequence is that of Putative ribosomal protein uL16-like, mitochondrial from Arabidopsis thaliana (Mouse-ear cress).